The primary structure comprises 178 residues: Large ribosomal subunit protein bL17 (178 aa).

A disordered region spans residues 150–178; the sequence is PADEPVVAEENAPQSAVKDAVDECEGKAD. Residues 168–178 show a composition bias toward basic and acidic residues; that stretch reads DAVDECEGKAD.

Belongs to the bacterial ribosomal protein bL17 family. In terms of assembly, part of the 50S ribosomal subunit. Contacts protein L32.

The protein is Large ribosomal subunit protein bL17 of Geobacter metallireducens (strain ATCC 53774 / DSM 7210 / GS-15).